A 946-amino-acid polypeptide reads, in one-letter code: MDVNQIRKTFIDFFREKCEHTFVPSSAVIPHDDPTLLFANAGMNQFKPIFLGQVNPKSEQAKLKRAVNSQKCIRAGGKHNDLDDVGKDTYHHTFFEMLGNWSFGNYFKKEAITWAWELLTEVYKLDKERLYVTYFRGDPEKGLEADLEAKNLWLQYLPEERVLPFGMKENFWEMGDQGPCGPCSEIHYDKVEGRDGASFVNADDPTLIEIWNLVFIQYNREADKSLRPLPQKHVDTGMGLERLTSIIQKVPTNYDTDVFMPIFAAIQEVTGYPEPYGGKVGAEDTQQVDMAYRVIADHIRTLTFSIADGAAPSVDGRGQVLRRILRRAVRYGKQKLNAPAGFFSKLVDVVIANFGEFFPELRKKPEHIKMVLTREEDMFNKTLEKGIVEFEKMIKKSVNNTLSAENAYFLSTCYGFPIDLTTIMAEEKNYKVDIKGYEGLCEAQSEIDRKRQKEKKVELTLGAEANAWLKNNDIKPTDDSFKYKQHEIQSVIKAIWNGKEFVDTAPKGTLIGVVLENSNFYAEQGGQIYDIGQLSFIDDQKTAFDVKDCKVFGGYVLHIGYLSYECDSLKVGDRVELTVDYTRRSPIMSNHTSTHMVNYALKNILGDGIDQRGSFVDAQRFRFDFSFGRAITKDELIKIDQIVNDQIFKQLDVHAKEVGLASAKKINGLRAVFGEVYPDPVRVVSVGVPVEQLIENPTNPEWANYSIEFCGGTHLSNTKQAELFTITSEETLGAGVRRIVAVTGSEAASAIELNKELEVRFNNALKLSGSELAKEIVSLLDLLKVVTISASVRMNLVETLKEVQALQRKQVKEQETILAQQAQTYLEKTSEELAKSQPKVFVDLVNFNSNTPLITETIKKIQTKSPMTAIMLISPDEEKGKVTCIGIVPKDSEISKTLTANAWVVKVTEVLGGKGGGKVDVAQGVGSKLDKIDEAILVSREFANAN.

Zn(2+)-binding residues include histidine 591, histidine 595, cysteine 710, and histidine 714.

This sequence belongs to the class-II aminoacyl-tRNA synthetase family. In terms of assembly, monomer. Requires Zn(2+) as cofactor.

It localises to the cytoplasm. The catalysed reaction is tRNA(Ala) + L-alanine + ATP = L-alanyl-tRNA(Ala) + AMP + diphosphate. In terms of biological role, catalyzes the attachment of alanine to tRNA(Ala) in a two-step reaction: alanine is first activated by ATP to form Ala-AMP and then transferred to the acceptor end of tRNA(Ala). Also edits incorrectly charged tRNA(Ala) via its editing domain. The protein is Alanine--tRNA ligase, cytoplasmic (alaS) of Dictyostelium discoideum (Social amoeba).